The following is a 285-amino-acid chain: Bifunctional protein FolD (285 aa).

Residues 165 to 167 and S190 contribute to the NADP(+) site; that span reads GRS.

This sequence belongs to the tetrahydrofolate dehydrogenase/cyclohydrolase family. In terms of assembly, homodimer.

It catalyses the reaction (6R)-5,10-methylene-5,6,7,8-tetrahydrofolate + NADP(+) = (6R)-5,10-methenyltetrahydrofolate + NADPH. The catalysed reaction is (6R)-5,10-methenyltetrahydrofolate + H2O = (6R)-10-formyltetrahydrofolate + H(+). It participates in one-carbon metabolism; tetrahydrofolate interconversion. Functionally, catalyzes the oxidation of 5,10-methylenetetrahydrofolate to 5,10-methenyltetrahydrofolate and then the hydrolysis of 5,10-methenyltetrahydrofolate to 10-formyltetrahydrofolate. This chain is Bifunctional protein FolD, found in Burkholderia pseudomallei (strain 1710b).